The following is a 143-amino-acid chain: Large ribosomal subunit protein uL11 (143 aa).

The protein belongs to the universal ribosomal protein uL11 family. In terms of assembly, part of the ribosomal stalk of the 50S ribosomal subunit. Interacts with L10 and the large rRNA to form the base of the stalk. L10 forms an elongated spine to which L12 dimers bind in a sequential fashion forming a multimeric L10(L12)X complex. Post-translationally, one or more lysine residues are methylated.

Forms part of the ribosomal stalk which helps the ribosome interact with GTP-bound translation factors. The chain is Large ribosomal subunit protein uL11 from Chromohalobacter salexigens (strain ATCC BAA-138 / DSM 3043 / CIP 106854 / NCIMB 13768 / 1H11).